Here is a 290-residue protein sequence, read N- to C-terminus: Feruloyl esterase D (290 aa).

The first 25 residues, 1–25 (MAGLHSRLTTFLLLLLSALPAIAAA), serve as a signal peptide directing secretion. The tract at residues 260 to 280 (HGGDHNPSQRDPGQNDPFAPR) is disordered.

It belongs to the serine esterase family.

Its subcellular location is the secreted. It carries out the reaction feruloyl-polysaccharide + H2O = ferulate + polysaccharide.. In terms of biological role, involved in degradation of plant cell walls. Hydrolyzes the feruloyl-arabinose ester bond in arabinoxylans as well as the feruloyl-galactose and feruloyl-arabinose ester bonds in pectin. Active against methyl esters of ferulate (MFA), sinapate (MSA), caffeate (MCA) and p-coumarate (MpCA). In Neurospora crassa (strain ATCC 24698 / 74-OR23-1A / CBS 708.71 / DSM 1257 / FGSC 987), this protein is Feruloyl esterase D.